Consider the following 201-residue polypeptide: Eukaryotic translation initiation factor 4E-5 (201 aa).

A disulfide bridge connects residues C122 and C126.

The protein belongs to the eukaryotic initiation factor 4E family. As to quaternary structure, eIF4F is a multi-subunit complex, the composition of which varies with external and internal environmental conditions. It is composed of at least eIF4A, eIF4E and eIF4G. eIF4E is also known to interact with other partners. As to expression, enriched in the germline.

Recognizes and binds the 7-methylguanosine-containing mRNA cap during an early step in the initiation of protein synthesis and facilitates ribosome binding by inducing the unwinding of the mRNAs secondary structures. All 5 eIF4E proteins bind monomethyl cap structures. Only ife-1, ife-2 and ife-5 bind trimethyl cap structures which result from trans-splicing. Translation of trimethyl cap structure mRNAs may be regulated by intracellular redox state; disulfide bonds change the width and depth of the cap-binding cavity determining selectivity to mRNA caps. The sequence is that of Eukaryotic translation initiation factor 4E-5 (ife-5) from Caenorhabditis elegans.